The chain runs to 347 residues: Phosphate acyltransferase (347 aa).

Belongs to the PlsX family. In terms of assembly, homodimer. Probably interacts with PlsY.

The protein localises to the cytoplasm. The enzyme catalyses a fatty acyl-[ACP] + phosphate = an acyl phosphate + holo-[ACP]. It participates in lipid metabolism; phospholipid metabolism. In terms of biological role, catalyzes the reversible formation of acyl-phosphate (acyl-PO(4)) from acyl-[acyl-carrier-protein] (acyl-ACP). This enzyme utilizes acyl-ACP as fatty acyl donor, but not acyl-CoA. The sequence is that of Phosphate acyltransferase from Syntrophotalea carbinolica (strain DSM 2380 / NBRC 103641 / GraBd1) (Pelobacter carbinolicus).